A 161-amino-acid polypeptide reads, in one-letter code: Glycine cleavage system H protein 3 (161 aa).

The Lipoyl-binding domain occupies 40–122 (TVTLGLTDVG…YGDAWIVKIK (83 aa)). K81 carries the N6-lipoyllysine modification.

The protein belongs to the GcvH family. In terms of assembly, the glycine cleavage system is composed of four proteins: P, T, L and H. Requires (R)-lipoate as cofactor.

Functionally, the glycine cleavage system catalyzes the degradation of glycine. The H protein shuttles the methylamine group of glycine from the P protein to the T protein. This is Glycine cleavage system H protein 3 from Aquifex aeolicus (strain VF5).